We begin with the raw amino-acid sequence, 83 residues long: Alpha-toxin CvIV4 (83 aa).

An N-terminal signal peptide occupies residues 1 to 19 (MNYFILILVAALLILDVNC). Residues 21-79 (KDGYPVEHSGCKYTCWKNEYCDKVCKDLKGEGGYCYINLTCWCTGLPDNVPLKTNQRCN) enclose the LCN-type CS-alpha/beta domain. 4 cysteine pairs are disulfide-bonded: cysteine 31/cysteine 78, cysteine 35/cysteine 55, cysteine 41/cysteine 61, and cysteine 45/cysteine 63.

This sequence belongs to the long (4 C-C) scorpion toxin superfamily. Sodium channel inhibitor family. As to expression, expressed by the venom gland.

The protein resides in the secreted. Functionally, this toxin significantly slows the fast inactivation of Nav1.2/SCN2A (EC(50)=580 nM), Nav1.3/SCN3A (EC(50)=1310 nM), Nav1.4/SCN4A (EC(50)=530 nM), and Nav1.7/SCN9A (EC(50)=1340 nM). The toxin does not affect the peak amplitude of Nav1.7 currents. On all channels cited above, the toxin requires depolarizing potentials to slow channel inactivation. In addition, the toxin has no or very weak effects on the voltage-dependence of steady-state inactivation, and on voltage-dependence of activation. In vivo, it produces paw licking in mice equivalent to the effects of whole venom. This is Alpha-toxin CvIV4 from Centruroides vittatus (Striped bark scorpion).